The chain runs to 1155 residues: DNA-directed RNA polymerase subunit beta (1155 aa).

This sequence belongs to the RNA polymerase beta chain family. The RNAP catalytic core consists of 2 alpha, 1 beta, 1 beta' and 1 omega subunit. When a sigma factor is associated with the core the holoenzyme is formed, which can initiate transcription.

The catalysed reaction is RNA(n) + a ribonucleoside 5'-triphosphate = RNA(n+1) + diphosphate. Its function is as follows. DNA-dependent RNA polymerase catalyzes the transcription of DNA into RNA using the four ribonucleoside triphosphates as substrates. This chain is DNA-directed RNA polymerase subunit beta, found in Thermobifida fusca (strain YX).